A 258-amino-acid chain; its full sequence is 5'-nucleotidase SurE (258 aa).

A divalent metal cation-binding residues include Asp14, Asp15, Ser45, and Asn101.

Belongs to the SurE nucleotidase family. Requires a divalent metal cation as cofactor.

The protein localises to the cytoplasm. The enzyme catalyses a ribonucleoside 5'-phosphate + H2O = a ribonucleoside + phosphate. Nucleotidase that shows phosphatase activity on nucleoside 5'-monophosphates. In Chlorobium limicola (strain DSM 245 / NBRC 103803 / 6330), this protein is 5'-nucleotidase SurE.